The chain runs to 301 residues: MTTLDDKLLGEKLQYYYSSSEEEDSDHEDKDRGRGALAGSSMPADADLAGEGISVNTGPKGVINDWRRFKQLETEQREEQCREMERLIKKLSLSCRSHLDEEEEQRKQKDLQEKISGKMTLKDLAVMNEDQDDEEFLQQYRKQRMEEMRQQLYQGPQFKQVFEIPSGEGFLDMIDKEQRSTLIMVHIYEDGIPGTEAMNGCMLCLAAEYPAVKFCRVRSSVIGASSRFTRNALPALLIYKGGELIGNFVRVTDQLGEDFFAVDLEAFLQEFGLLPEKEVLLRTSVRNSATCHSEDSDLEID.

The residue at position 2 (T2) is an N-acetylthreonine. Residues 15–53 are disordered; that stretch reads YYYSSSEEEDSDHEDKDRGRGALAGSSMPADADLAGEGI. Residues S20, S25, S226, S293, and S296 each carry the phosphoserine modification. The region spanning 37–299 is the Phosducin domain; sequence LAGSSMPADA…TCHSEDSDLE (263 aa). Residues 158-301 are thioredoxin fold; it reads FKQVFEIPSG…HSEDSDLEID (144 aa).

Belongs to the phosducin family. As to quaternary structure, forms a complex with the beta and gamma subunits of the GTP-binding protein, transducin. Interacts with the CCT chaperonin complex.

Its subcellular location is the cell projection. The protein resides in the cilium. Functions as a co-chaperone for CCT in the assembly of heterotrimeric G protein complexes, facilitates the assembly of both Gbeta-Ggamma and RGS-Gbeta5 heterodimers. Also acts as a positive regulator of hedgehog signaling and regulates ciliary function. This chain is Phosducin-like protein (PDCL), found in Bos taurus (Bovine).